A 178-amino-acid chain; its full sequence is Adenine phosphoribosyltransferase (178 aa).

The protein belongs to the purine/pyrimidine phosphoribosyltransferase family. In terms of assembly, homodimer.

Its subcellular location is the cytoplasm. It catalyses the reaction AMP + diphosphate = 5-phospho-alpha-D-ribose 1-diphosphate + adenine. It functions in the pathway purine metabolism; AMP biosynthesis via salvage pathway; AMP from adenine: step 1/1. Its function is as follows. Catalyzes a salvage reaction resulting in the formation of AMP, that is energically less costly than de novo synthesis. This Cereibacter sphaeroides (strain ATCC 17023 / DSM 158 / JCM 6121 / CCUG 31486 / LMG 2827 / NBRC 12203 / NCIMB 8253 / ATH 2.4.1.) (Rhodobacter sphaeroides) protein is Adenine phosphoribosyltransferase.